Here is a 160-residue protein sequence, read N- to C-terminus: Lymphocyte antigen 86 (160 aa).

Positions 1-20 are cleaved as a signal peptide; it reads MKTLNVLALVLVLLCINAST. Cystine bridges form between Cys-28–Cys-53, Cys-40–Cys-149, and Cys-97–Cys-107.

As to quaternary structure, M-shaped tetramer of two CD180-LY86 heterodimers. In terms of tissue distribution, detected in the macrophage-like 10.4 cells.

It is found in the secreted. It localises to the extracellular space. In terms of biological role, may cooperate with CD180 and TLR4 to mediate the innate immune response to bacterial lipopolysaccharide (LPS) and cytokine production. Important for efficient CD180 cell surface expression. The polypeptide is Lymphocyte antigen 86 (LY86) (Gallus gallus (Chicken)).